A 440-amino-acid polypeptide reads, in one-letter code: Ribosomal protein uS12 methylthiotransferase RimO (440 aa).

One can recognise an MTTase N-terminal domain in the interval 2 to 118 (KKAGIIHLGC…FVSLITSNGE (117 aa)). Residues Cys11, Cys47, Cys81, Cys154, Cys158, and Cys161 each coordinate [4Fe-4S] cluster. The Radical SAM core domain occupies 140 to 370 (ISPNFWVYVK…MSTQKEISKK (231 aa)). The region spanning 373–440 (AKLLGREFDV…RAYDLLGELV (68 aa)) is the TRAM domain.

Belongs to the methylthiotransferase family. RimO subfamily. [4Fe-4S] cluster is required as a cofactor.

The protein resides in the cytoplasm. The enzyme catalyses L-aspartate(89)-[ribosomal protein uS12]-hydrogen + (sulfur carrier)-SH + AH2 + 2 S-adenosyl-L-methionine = 3-methylsulfanyl-L-aspartate(89)-[ribosomal protein uS12]-hydrogen + (sulfur carrier)-H + 5'-deoxyadenosine + L-methionine + A + S-adenosyl-L-homocysteine + 2 H(+). In terms of biological role, catalyzes the methylthiolation of an aspartic acid residue of ribosomal protein uS12. This chain is Ribosomal protein uS12 methylthiotransferase RimO, found in Dictyoglomus thermophilum (strain ATCC 35947 / DSM 3960 / H-6-12).